We begin with the raw amino-acid sequence, 255 residues long: MDLIIASRMDEASMLMAEKIIDLYDFNRLNENEYQKDGFKLMFIDDLHIYHNMEKLDFDTLIFLSRHSSSAGVKSLTVHSIGNYRKAELGGYDNKTVLSAPYEMSSSLRSIKELYNDDGYNITFEATHHGPYTKNRSYFIEIGTSGEDWHNDKILEIMARSVIEKNVKRFRSGIGIGGGHYAPKISDYFFNNDINIGHIIPKYVSETIKDNQIIESIENTENCSFILIDWKGSPSRLRSLALDAADKCSLELIKI.

Belongs to the DtdA deacylase family. As to quaternary structure, monomer. Zn(2+) is required as a cofactor.

It catalyses the reaction a D-aminoacyl-tRNA + H2O = a tRNA + a D-alpha-amino acid + H(+). It carries out the reaction glycyl-tRNA(Ala) + H2O = tRNA(Ala) + glycine + H(+). Its function is as follows. D-aminoacyl-tRNA deacylase with broad substrate specificity. By recycling D-aminoacyl-tRNA to D-amino acids and free tRNA molecules, this enzyme counteracts the toxicity associated with the formation of D-aminoacyl-tRNA entities in vivo. This is D-aminoacyl-tRNA deacylase from Picrophilus torridus (strain ATCC 700027 / DSM 9790 / JCM 10055 / NBRC 100828 / KAW 2/3).